The sequence spans 373 residues: 3 beta-hydroxysteroid dehydrogenase/Delta 5--&gt;4-isomerase type 1 (373 aa).

NADP(+) is bound by residues 10 to 15 (GAGGFL), Tyr-155, and Lys-159. Catalysis depends on Lys-159, which acts as the Proton donor. The chain crosses the membrane as a helical span at residues 288–308 (LALMYWIGFLLEVVSFLLSPV).

It belongs to the 3-beta-HSD family. In terms of tissue distribution, adrenal glands, testes and ovaries.

The protein resides in the endoplasmic reticulum membrane. It localises to the mitochondrion membrane. The enzyme catalyses a 3beta-hydroxy-Delta(5)-steroid + NAD(+) = a 3-oxo-Delta(5)-steroid + NADH + H(+). The catalysed reaction is pregnenolone + NAD(+) = pregn-5-ene-3,20-dione + NADH + H(+). It catalyses the reaction 3beta-hydroxyandrost-5-en-17-one + NAD(+) = androst-5-ene-3,17-dione + NADH + H(+). It carries out the reaction androst-5-en-3beta,17beta-diol + NAD(+) = 17beta-hydroxy-androst-5-en-3-one + NADH + H(+). The enzyme catalyses a 3beta-hydroxysteroid + NADP(+) = a 3-oxosteroid + NADPH + H(+). The catalysed reaction is 5alpha-androstane-3beta,17beta-diol + NADP(+) = 17beta-hydroxy-5alpha-androstan-3-one + NADPH + H(+). It catalyses the reaction 3beta-hydroxy-5alpha-androstan-17-one + NADP(+) = 5alpha-androstan-3,17-dione + NADPH + H(+). It carries out the reaction a 3-oxo-Delta(5)-steroid = a 3-oxo-Delta(4)-steroid. The enzyme catalyses pregn-5-ene-3,20-dione = progesterone. The catalysed reaction is androst-5-ene-3,17-dione = androst-4-ene-3,17-dione. It catalyses the reaction 17beta-hydroxy-androst-5-en-3-one = testosterone. It carries out the reaction 5alpha-androstane-3beta,17beta-diol + NAD(+) = 17beta-hydroxy-5alpha-androstan-3-one + NADH + H(+). It functions in the pathway steroid hormone biosynthesis. The protein operates within steroid metabolism. A bifunctional enzyme responsible for the oxidation and isomerization of 3beta-hydroxy-Delta(5)-steroid precursors to 3-oxo-Delta(4)-steroids, an essential step in steroid hormone biosynthesis. Specifically catalyzes the conversion of pregnenolone to progesterone, 17alpha-hydroxypregnenolone to 17alpha-hydroxyprogesterone, dehydroepiandrosterone (DHEA) to 4-androstenedione and androstenediol to testosterone. Additionally, catalyzes the interconversion between 3beta-hydroxy and 3-oxo-5alpha-androstane steroids controlling the bioavalability of the active forms. Specifically converts dihydrotestosterone to its inactive form 5alpha-androstanediol, that does not bind androgen receptor/AR. Also converts androstanedione, a precursor of testosterone and estrone, to epiandrosterone. Expected to use NAD(+) as preferred electron donor for the 3beta-hydroxy-steroid dehydrogenase activity and NADPH for the 3-ketosteroid reductase activity. In Macaca mulatta (Rhesus macaque), this protein is 3 beta-hydroxysteroid dehydrogenase/Delta 5--&gt;4-isomerase type 1 (HSD3B1).